The following is a 160-amino-acid chain: Leucokinin (160 aa).

A signal peptide spans methionine 1–glycine 19. Positions alanine 20–glutamate 130 are excised as a propeptide. Residue glycine 147 is modified to Glycine amide. The propeptide occupies serine 151–tyrosine 160.

It is found in the secreted. Functionally, acts through intracellular calcium in Malpighian tubule stellate cells to raise chloride conductance. This chain is Leucokinin (Lk), found in Drosophila melanogaster (Fruit fly).